Here is a 264-residue protein sequence, read N- to C-terminus: Thymidylate synthase (264 aa).

Arg21 contributes to the dUMP binding site. Residue His51 participates in (6R)-5,10-methylene-5,6,7,8-tetrahydrofolate binding. Position 126 to 127 (126 to 127 (RR)) interacts with dUMP. Cys146 (nucleophile) is an active-site residue. Residues 166–169 (RSAD), Asn177, and 207–209 (HLY) contribute to the dUMP site. Residue Asp169 participates in (6R)-5,10-methylene-5,6,7,8-tetrahydrofolate binding. Ala263 lines the (6R)-5,10-methylene-5,6,7,8-tetrahydrofolate pocket.

Belongs to the thymidylate synthase family. Bacterial-type ThyA subfamily. As to quaternary structure, homodimer.

The protein localises to the cytoplasm. The enzyme catalyses dUMP + (6R)-5,10-methylene-5,6,7,8-tetrahydrofolate = 7,8-dihydrofolate + dTMP. Its pathway is pyrimidine metabolism; dTTP biosynthesis. Functionally, catalyzes the reductive methylation of 2'-deoxyuridine-5'-monophosphate (dUMP) to 2'-deoxythymidine-5'-monophosphate (dTMP) while utilizing 5,10-methylenetetrahydrofolate (mTHF) as the methyl donor and reductant in the reaction, yielding dihydrofolate (DHF) as a by-product. This enzymatic reaction provides an intracellular de novo source of dTMP, an essential precursor for DNA biosynthesis. The polypeptide is Thymidylate synthase (Cytophaga hutchinsonii (strain ATCC 33406 / DSM 1761 / CIP 103989 / NBRC 15051 / NCIMB 9469 / D465)).